Reading from the N-terminus, the 476-residue chain is MSRFSGALQLTDLDDFITPSQECIKPVTIDKTKSKTGAKITVEADGYYEESESGKQKLQKVEITLQDCLACSGCITSAEGVLITQQSQEELLKVLRENQTLKASGDNEQVRTIVFTISVQPLLSLAHRYDLSLEEAGRHLAGYLQQLGADYVLCTKIADDLALLECRQEFVERFRNNAELSMLSSSCPGWVCYAEKTHGNFILPHIATTRSPQQIMGVLVKQLLAEKLGVSGSRIYHVTIMPCYDKKLEASREDFYSEVSSSRDVDCVITAIEVEQMLQAEEQTLQQFEPKDLHWPWTDQQPESMLWAHESTMSGGYAEHIFKYAAKELFNEDTPTELQFRALRNRDFSEICLEKEGKVLLKFAIANGFRNIQNLVQKLKRGKGPGYQFVEVMACPSGCINGGAQVRPTTGQHVRQLTQQLEELYKQLPRSNPDNTHTKQIYADFFDGTHTDKSAQLLHTSYHAVEKLNTALNIKW.

8 residues coordinate [4Fe-4S] cluster: cysteine 23, cysteine 68, cysteine 71, cysteine 74, cysteine 187, cysteine 243, cysteine 395, and cysteine 399.

It belongs to the NARF family.

In terms of biological role, component of the cytosolic iron-sulfur (Fe/S) protein assembly machinery. Required for maturation of extramitochondrial Fe/S proteins. The chain is Probable cytosolic Fe-S cluster assembly factor GH10760 from Drosophila grimshawi (Hawaiian fruit fly).